Here is a 422-residue protein sequence, read N- to C-terminus: MVNKDLIPKYWYNIIPDLPKPLPPPRDPPDAEFSRIELLKKILPKEVLRQQFTIERFIKIPEEVRDRYAIIGRPTPLMRAKRLEEYLDTPAKIYFKFEGATPTGSHKINTAVPQAYFAAEEGISHVVTETGAGQWGTAVALAASMYDLSSTIFMVRVSYEQKPMRKTIMELYGGKVYASPTDLTEFGRKILKENPNHPGSLGIAMSEAIEFALNHNFRYLVGSVLDVVLLHQSVIGMEAIAQLDELGEEPDILIGCVGGGSNFGGFTYPFIGAKKGKKYIAVGAAEIPKFSTGKYEYDYPDTAGLLPLVKMITLGKDYVPPPIYAGGLRYHGVAPTLSLLIKEKIVEWREYKEEEIYEAAKIFMKTQGIVPAPESAHAIKAVIDEALKAKTEKERRVIVFNLSGHGLLDLGNYESIRRRVEK.

K107 is modified (N6-(pyridoxal phosphate)lysine).

The protein belongs to the TrpB family. In terms of assembly, tetramer of two alpha and two beta chains. Requires pyridoxal 5'-phosphate as cofactor.

It carries out the reaction (1S,2R)-1-C-(indol-3-yl)glycerol 3-phosphate + L-serine = D-glyceraldehyde 3-phosphate + L-tryptophan + H2O. It participates in amino-acid biosynthesis; L-tryptophan biosynthesis; L-tryptophan from chorismate: step 5/5. Its function is as follows. The beta subunit is responsible for the synthesis of L-tryptophan from indole and L-serine. This Sulfurisphaera tokodaii (strain DSM 16993 / JCM 10545 / NBRC 100140 / 7) (Sulfolobus tokodaii) protein is Tryptophan synthase beta chain 1 (trpB1).